A 787-amino-acid chain; its full sequence is Aconitate hydratase, mitochondrial (787 aa).

A mitochondrion-targeting transit peptide spans 1-33; that stretch reads MISTRLARAGALAPKSRLFLGTRAFATVGDSPL. Substrate contacts are provided by residues Gln-104 and 197 to 199; that span reads DSH. Residues Cys-390, Cys-453, and Cys-456 each coordinate [4Fe-4S] cluster. Substrate is bound by residues Arg-479 and Arg-484. A disordered region spans residues 529 to 559; it reads LQPPTGEGLPAKGYDPGRDTYQAPPADRSSV. Substrate-binding positions include Arg-612 and 675–676; that span reads SR.

This sequence belongs to the aconitase/IPM isomerase family. Requires [4Fe-4S] cluster as cofactor.

The protein resides in the mitochondrion. The enzyme catalyses citrate = D-threo-isocitrate. It catalyses the reaction (2R)-homocitrate = cis-homoaconitate + H2O. The protein operates within carbohydrate metabolism; tricarboxylic acid cycle; isocitrate from oxaloacetate: step 2/2. It functions in the pathway amino-acid biosynthesis; L-lysine biosynthesis via AAA pathway; L-alpha-aminoadipate from 2-oxoglutarate: step 2/5. Functionally, catalyzes the isomerization of citrate to isocitrate via cis-aconitate, a step in the citric acid cycle. Also catalyzes the reversible dehydration of (R)-homocitrate to cis-homoaconitate, a step in the alpha-aminoadipate pathway for lysine biosynthesis. The sequence is that of Aconitate hydratase, mitochondrial (acoA) from Aspergillus fumigatus (strain ATCC MYA-4609 / CBS 101355 / FGSC A1100 / Af293) (Neosartorya fumigata).